The sequence spans 430 residues: tRNA(Ile)-lysidine synthase (430 aa).

27–32 (SGGSDS) contributes to the ATP binding site.

It belongs to the tRNA(Ile)-lysidine synthase family.

The protein resides in the cytoplasm. The enzyme catalyses cytidine(34) in tRNA(Ile2) + L-lysine + ATP = lysidine(34) in tRNA(Ile2) + AMP + diphosphate + H(+). In terms of biological role, ligates lysine onto the cytidine present at position 34 of the AUA codon-specific tRNA(Ile) that contains the anticodon CAU, in an ATP-dependent manner. Cytidine is converted to lysidine, thus changing the amino acid specificity of the tRNA from methionine to isoleucine. The chain is tRNA(Ile)-lysidine synthase from Rickettsia felis (strain ATCC VR-1525 / URRWXCal2) (Rickettsia azadi).